We begin with the raw amino-acid sequence, 314 residues long: Small ribosomal subunit biogenesis GTPase RsgA (314 aa).

The disordered stretch occupies residues 1 to 21 (MKRAPTKQPAKPAARGGERAQ). A CP-type G domain is found at 85–246 (SDQFKSKLFA…LIDSPGFQEF (162 aa)). GTP contacts are provided by residues 134 to 137 (NKID) and 188 to 196 (GQSGMGKST). Positions 270, 275, 277, and 283 each coordinate Zn(2+).

It belongs to the TRAFAC class YlqF/YawG GTPase family. RsgA subfamily. Monomer. Associates with 30S ribosomal subunit, binds 16S rRNA. The cofactor is Zn(2+).

The protein resides in the cytoplasm. Its function is as follows. One of several proteins that assist in the late maturation steps of the functional core of the 30S ribosomal subunit. Helps release RbfA from mature subunits. May play a role in the assembly of ribosomal proteins into the subunit. Circularly permuted GTPase that catalyzes slow GTP hydrolysis, GTPase activity is stimulated by the 30S ribosomal subunit. This Burkholderia pseudomallei (strain 1106a) protein is Small ribosomal subunit biogenesis GTPase RsgA.